Consider the following 163-residue polypeptide: 2-amino-4-hydroxy-6-hydroxymethyldihydropteridine pyrophosphokinase (163 aa).

Belongs to the HPPK family.

It carries out the reaction 6-hydroxymethyl-7,8-dihydropterin + ATP = (7,8-dihydropterin-6-yl)methyl diphosphate + AMP + H(+). Its pathway is cofactor biosynthesis; tetrahydrofolate biosynthesis; 2-amino-4-hydroxy-6-hydroxymethyl-7,8-dihydropteridine diphosphate from 7,8-dihydroneopterin triphosphate: step 4/4. Catalyzes the transfer of pyrophosphate from adenosine triphosphate (ATP) to 6-hydroxymethyl-7,8-dihydropterin, an enzymatic step in folate biosynthesis pathway. This is 2-amino-4-hydroxy-6-hydroxymethyldihydropteridine pyrophosphokinase (folK) from Helicobacter pylori (strain ATCC 700392 / 26695) (Campylobacter pylori).